Consider the following 176-residue polypeptide: Urease accessory protein UreE (176 aa).

Residues 134–176 (FTPEGGAYGHGRTHAHEHGHTNHHGQHHDHADHGHSHDHSHDQ) form a disordered region. The span at 161–176 (HDHADHGHSHDHSHDQ) shows a compositional bias: basic and acidic residues.

The protein belongs to the UreE family.

Its subcellular location is the cytoplasm. Its function is as follows. Involved in urease metallocenter assembly. Binds nickel. Probably functions as a nickel donor during metallocenter assembly. This is Urease accessory protein UreE from Ruegeria sp. (strain TM1040) (Silicibacter sp.).